Reading from the N-terminus, the 251-residue chain is Chloride intracellular channel protein 5 (251 aa).

The tract at residues 1 to 98 is required for insertion into the membrane; sequence MTDSATTNGD…EEFLEETLTP (98 aa). A G-site motif is present at residues 32-35; that stretch reads CPFS. The helical transmembrane segment at 34-54 threads the bilayer; the sequence is FSQRLFMILWLKGVVFNVTTV. The 141-residue stretch at 101-241 folds into the GST C-terminal domain; sequence YPKLAAKHRE…AADSEIELAY (141 aa).

This sequence belongs to the chloride channel CLIC family. In terms of assembly, component of a multimeric complex consisting of several cytoskeletal proteins, including actin, ezrin, alpha-actinin, gelsolin, and IQGAP1. Interacts with AKAP9. Interacts with TPRN. TPRN, CLIC5 and PTPQR form concentric rings at the base of stereocilia and may form a complex. Interacts with EZR, MYO6 and RDX; the proteins may work together as a complex to stabilize linkages between the plasma membrane and subjacent actin cytoskeleton at the stereocilium base. In terms of tissue distribution, detected in lung and inner ear. Detected in embryonic cochlea, on microvilli-covered apical surfaces of interdental cells, columnar cells of Kolliker's organ, and on stereocilia of inner and outer hair cells (at protein level). Also detected in the eye, where it localizes to lens fiber cells in the lens epithelium (at protein level).

The protein resides in the golgi apparatus. It is found in the cytoplasm. The protein localises to the cytoskeleton. Its subcellular location is the microtubule organizing center. It localises to the centrosome. The protein resides in the cell cortex. It is found in the membrane. The protein localises to the apical cell membrane. Its subcellular location is the mitochondrion. It localises to the cell projection. The protein resides in the stereocilium. It carries out the reaction Na(+)(in) = Na(+)(out). It catalyses the reaction K(+)(in) = K(+)(out). The enzyme catalyses chloride(in) = chloride(out). Inhibited by F-actin. In terms of biological role, in the soluble state, catalyzes glutaredoxin-like thiol disulfide exchange reactions with reduced glutathione as electron donor. Can insert into membranes and form non-selective ion channels almost equally permeable to Na(+), K(+) and Cl(-). Required for normal hearing. Necessary for the formation of stereocilia in the inner ear and normal development of the organ of Corti. Required for the proper localization of PTPRQ and RDX to the stereocilium base during postnatal maturation of hair bundles. Can insert into membranes and form poorly selective ion channels that may also transport chloride ions. Required for the development and/or maintenance of the proper glomerular endothelial cell and podocyte architecture. Plays a role in formation of the lens suture in the eye, which is important for normal optical properties of the lens. In Mus musculus (Mouse), this protein is Chloride intracellular channel protein 5 (Clic5).